Reading from the N-terminus, the 311-residue chain is MALPILLDCDPGHDDAIAIVLALASPELDVKAITSSAGNQTPEKTLRNVLRMLTLLNRTDIPVASGAVKPLMRNLIIADNVHGESGLDGPALPEPTFAPQNCTAVELMAKTLCESEEPVTIVSTGPQTNVALLLNSHPELHSKIARIVIMGGAMGLGNWTPAAEFNIYVDPEAAEIVFQSGIPVVMAGLDVTHKAQIHVEDTERFRAIGNPVSTIVAELLDFFLEYHKDEKWGFVGAPLHDPCTIAWLLKPELFTTVERWVGVETQGKYTQGMTVVDYYYLTGNKPNATVMVDVDRQGFVDLLADRLKFYA.

His240 is a catalytic residue.

It belongs to the IUNH family. RihA subfamily.

Functionally, hydrolyzes with equal efficiency cytidine or uridine to ribose and cytosine or uracil, respectively. This is Pyrimidine-specific ribonucleoside hydrolase RihA from Escherichia coli O81 (strain ED1a).